We begin with the raw amino-acid sequence, 665 residues long: Transketolase (665 aa).

Residue His26 participates in substrate binding. Residues His66 and 114–116 each bind thiamine diphosphate; that span reads GPL. Asp155 is a Mg(2+) binding site. Residues Gly156 and Asn185 each contribute to the thiamine diphosphate site. Residues Asn185 and Ile187 each contribute to the Mg(2+) site. His261, Arg358, and Ser385 together coordinate substrate. A thiamine diphosphate-binding site is contributed by His261. The active-site Proton donor is Glu411. Phe437 contacts thiamine diphosphate. The substrate site is built by His461, Asp469, and Arg520.

This sequence belongs to the transketolase family. In terms of assembly, homodimer. Mg(2+) is required as a cofactor. Requires Ca(2+) as cofactor. It depends on Mn(2+) as a cofactor. Co(2+) serves as cofactor. The cofactor is thiamine diphosphate.

It carries out the reaction D-sedoheptulose 7-phosphate + D-glyceraldehyde 3-phosphate = aldehydo-D-ribose 5-phosphate + D-xylulose 5-phosphate. Functionally, catalyzes the transfer of a two-carbon ketol group from a ketose donor to an aldose acceptor, via a covalent intermediate with the cofactor thiamine pyrophosphate. The polypeptide is Transketolase (tkt) (Buchnera aphidicola subsp. Schizaphis graminum (strain Sg)).